A 398-amino-acid chain; its full sequence is 1-deoxy-D-xylulose 5-phosphate reductoisomerase (398 aa).

NADPH contacts are provided by Thr13, Gly14, Ser15, Ile16, Arg40, and Asn127. Lys128 lines the 1-deoxy-D-xylulose 5-phosphate pocket. Glu129 contributes to the NADPH binding site. Residue Asp153 participates in Mn(2+) binding. 1-deoxy-D-xylulose 5-phosphate-binding residues include Ser154, Glu155, Ser188, and His211. Glu155 is a binding site for Mn(2+). Gly217 is a binding site for NADPH. 1-deoxy-D-xylulose 5-phosphate-binding residues include Ser224, Asn229, Lys230, and Glu233. Glu233 contacts Mn(2+).

This sequence belongs to the DXR family. Mg(2+) is required as a cofactor. Mn(2+) serves as cofactor.

It carries out the reaction 2-C-methyl-D-erythritol 4-phosphate + NADP(+) = 1-deoxy-D-xylulose 5-phosphate + NADPH + H(+). It functions in the pathway isoprenoid biosynthesis; isopentenyl diphosphate biosynthesis via DXP pathway; isopentenyl diphosphate from 1-deoxy-D-xylulose 5-phosphate: step 1/6. Functionally, catalyzes the NADPH-dependent rearrangement and reduction of 1-deoxy-D-xylulose-5-phosphate (DXP) to 2-C-methyl-D-erythritol 4-phosphate (MEP). This is 1-deoxy-D-xylulose 5-phosphate reductoisomerase from Cellvibrio japonicus (strain Ueda107) (Pseudomonas fluorescens subsp. cellulosa).